The sequence spans 506 residues: Sodium-coupled neutral amino acid symporter 2 (506 aa).

Residues 1–23 form a disordered region; the sequence is MKKAEMGRFSISPDEDSSSYSSN. The Cytoplasmic portion of the chain corresponds to 1–76; it reads MKKAEMGRFS…HPGTTSFGMS (76 aa). The segment at 1–96 is regulates protein turnover upon amino acid deprivation; the sequence is MKKAEMGRFS…SGILGLSYAM (96 aa). Residues Ser-10, Ser-12, Ser-21, Ser-22, and Ser-55 each carry the phosphoserine modification. Residues 77-96 form a helical membrane-spanning segment; that stretch reads VFNLSNAIVGSGILGLSYAM. Asn-82 contributes to the Na(+) binding site. The Extracellular portion of the chain corresponds to 97 to 102; it reads ANTGIA. A helical transmembrane segment spans residues 103-123; it reads LFIILLTFVSIFSLYSVHLLL. The Cytoplasmic segment spans residues 124–158; sequence KTANEGGSLLYEQLGYKAFGLVGKLAASGSITMQN. A helical membrane pass occupies residues 159–177; sequence IGAMSSYLFIVKYELPLVI. Topologically, residues 178–188 are extracellular; the sequence is QALTNIEDKTG. The chain crosses the membrane as a helical span at residues 189–209; that stretch reads LWYLNGNYLVLLVSLVVILPL. Residues 210–217 are Cytoplasmic-facing; that stretch reads SLFRNLGY. A helical transmembrane segment spans residues 218–238; sequence LGYTSGLSLLCMVFFLIVVIC. Residues 239–292 lie on the Extracellular side of the membrane; the sequence is KKFQVPCPVEAALIINETINTTLTQPTALVPALSHNVTENDSCRPHYFIFNSQT. Cys-245 and Cys-281 are oxidised to a cystine. N-linked (GlcNAc...) asparagine glycosylation is found at Asn-258 and Asn-274. Residues 293 to 313 traverse the membrane as a helical segment; the sequence is VYAVPILIFSFVCHPAVLPIY. Topologically, residues 314 to 329 are cytoplasmic; the sequence is EELKDRSRRRMMNVSK. The helical transmembrane segment at 330–350 threads the bilayer; it reads ISFFAMFLMYLLAALFGYLTF. Residues 351-371 are Extracellular-facing; sequence YEHVESELLHTYSSILGTDIL. A helical membrane pass occupies residues 372–392; sequence LLIVRLAVLMAVTLTVPVVIF. Residue Thr-386 coordinates Na(+). Over 393–413 the chain is Cytoplasmic; that stretch reads PIRSSVTHLLCASKDFSWWRH. A helical transmembrane segment spans residues 414 to 434; sequence SLITVSILAFTNLLVIFVPTI. The Extracellular segment spans residues 435-436; it reads RD. The chain crosses the membrane as a helical span at residues 437 to 457; that stretch reads IFGFIGASAASMLIFILPSAF. Over 458 to 472 the chain is Cytoplasmic; sequence YIKLVKKEPMKSVQK. The helical transmembrane segment at 473–495 threads the bilayer; the sequence is IGALFFLLSGVLVMTGSMALIVL. The Extracellular segment spans residues 496 to 506; the sequence is DWVHNAPGGGH.

The protein belongs to the amino acid/polyamine transporter 2 family. Post-translationally, polyubiquitination by NEDD4L regulates the degradation and the activity of SLC38A2. Ubiquitously expressed. Expressed in neocortex. Widely expressed in the central nervous system with higher concentrations in caudal regions. Expressed by glutamatergic and GABAergic neurons together with astrocytes and other non-neuronal cells in the cerebral cortex (at protein level).

It is found in the cell membrane. The catalysed reaction is L-alanine(in) + Na(+)(in) = L-alanine(out) + Na(+)(out). It catalyses the reaction glycine(in) + Na(+)(in) = glycine(out) + Na(+)(out). The enzyme catalyses L-serine(in) + Na(+)(in) = L-serine(out) + Na(+)(out). It carries out the reaction L-proline(in) + Na(+)(in) = L-proline(out) + Na(+)(out). The catalysed reaction is L-methionine(in) + Na(+)(in) = L-methionine(out) + Na(+)(out). It catalyses the reaction L-histidine(in) + Na(+)(in) = L-histidine(out) + Na(+)(out). The enzyme catalyses L-asparagine(in) + Na(+)(in) = L-asparagine(out) + Na(+)(out). It carries out the reaction L-glutamine(in) + Na(+)(in) = L-glutamine(out) + Na(+)(out). The catalysed reaction is L-threonine(in) + Na(+)(in) = L-threonine(out) + Na(+)(out). It catalyses the reaction L-leucine(in) + Na(+)(in) = L-leucine(out) + Na(+)(out). The enzyme catalyses L-phenylalanine(in) + Na(+)(in) = L-phenylalanine(out) + Na(+)(out). With respect to regulation, inhibited by N-methyl-D-glucamine. Inhibited by choline. Allosteric regulation of sodium ions binding by pH. Functionally, symporter that cotransports neutral amino acids and sodium ions from the extracellular to the intracellular side of the cell membrane. The transport is pH-sensitive, Li(+)-intolerant, electrogenic, driven by the Na(+) electrochemical gradient and cotransports of neutral amino acids and sodium ions with a stoichiometry of 1:1. May function in the transport of amino acids at the blood-brain barrier. May function in the transport of amino acids in the supply of maternal nutrients to the fetus through the placenta. Maintains a key metabolic glutamine/glutamate balance underpinning retrograde signaling by dendritic release of the neurotransmitter glutamate. Transports L-proline in differentiating osteoblasts for the efficient synthesis of proline-enriched proteins and provides proline essential for osteoblast differentiation and bone formation during bone development. This is Sodium-coupled neutral amino acid symporter 2 from Homo sapiens (Human).